The primary structure comprises 122 residues: Small ribosomal subunit protein uS13 (122 aa).

Positions 99–122 (RGQRTHTNARTRKGPAKAIAGKKK) are disordered.

It belongs to the universal ribosomal protein uS13 family. In terms of assembly, part of the 30S ribosomal subunit. Forms a loose heterodimer with protein S19. Forms two bridges to the 50S subunit in the 70S ribosome.

Functionally, located at the top of the head of the 30S subunit, it contacts several helices of the 16S rRNA. In the 70S ribosome it contacts the 23S rRNA (bridge B1a) and protein L5 of the 50S subunit (bridge B1b), connecting the 2 subunits; these bridges are implicated in subunit movement. Contacts the tRNAs in the A and P-sites. The sequence is that of Small ribosomal subunit protein uS13 from Bradyrhizobium diazoefficiens (strain JCM 10833 / BCRC 13528 / IAM 13628 / NBRC 14792 / USDA 110).